A 172-amino-acid chain; its full sequence is Biogenesis of lysosome-related organelles complex 1 subunit 6 (172 aa).

Disordered regions lie at residues 1 to 36 (MSVP…SPDE) and 135 to 172 (RALK…AKRM). Residues 63–167 (DLQRSKQALQ…FEREKQLTAR (105 aa)) are a coiled coil. The span at 143 to 164 (RQKEELEREQQREKEFEREKQL) shows a compositional bias: basic and acidic residues.

The protein belongs to the BLOC1S6 family. In terms of assembly, interacts with BLOC1S4 and DTNBP1/BLOC1S7. Homodimer. Component of the biogenesis of lysosome-related organelles complex 1 (BLOC-1) composed of BLOC1S1, BLOC1S2, BLOC1S3, BLOC1S4, BLOC1S5, BLOC1S6, DTNBP1/BLOC1S7 and SNAPIN/BLOC1S8. Octamer composed of one copy each BLOC1S1, BLOC1S2, BLOC1S3, BLOC1S4, BLOC1S5, BLOC1S6, DTNBP1/BLOC1S7 and SNAPIN/BLOC1S8. The BLOC-1 complex associates with the AP-3 protein complex and membrane protein cargos. Interacts with BLOC1S5, F-actin, SNAP25 isoform 1 and isoform 2, SNAP47 and STX12. Phosphorylated. In terms of tissue distribution, widely expressed.

Its subcellular location is the cytoplasm. It localises to the membrane. Its function is as follows. Component of the BLOC-1 complex, a complex that is required for normal biogenesis of lysosome-related organelles (LRO), such as platelet dense granules and melanosomes. In concert with the AP-3 complex, the BLOC-1 complex is required to target membrane protein cargos into vesicles assembled at cell bodies for delivery into neurites and nerve terminals. The BLOC-1 complex, in association with SNARE proteins, is also proposed to be involved in neurite extension. May play a role in intracellular vesicle trafficking, particularly in the vesicle-docking and fusion process. The chain is Biogenesis of lysosome-related organelles complex 1 subunit 6 (BLOC1S6) from Homo sapiens (Human).